The following is a 648-amino-acid chain: Biosynthetic arginine decarboxylase (648 aa).

At lysine 109 the chain carries N6-(pyridoxal phosphate)lysine. Isoleucine 291 to phenylalanine 301 provides a ligand contact to substrate.

Belongs to the Orn/Lys/Arg decarboxylase class-II family. SpeA subfamily. Mg(2+) serves as cofactor. Pyridoxal 5'-phosphate is required as a cofactor.

The enzyme catalyses L-arginine + H(+) = agmatine + CO2. It functions in the pathway amine and polyamine biosynthesis; agmatine biosynthesis; agmatine from L-arginine: step 1/1. Catalyzes the biosynthesis of agmatine from arginine. This Prochlorococcus marinus (strain AS9601) protein is Biosynthetic arginine decarboxylase.